The following is a 393-amino-acid chain: Homoserine O-succinyltransferase (393 aa).

Residues 62 to 372 (NAVLVCHALN…PHGHDAFLLD (311 aa)) enclose the AB hydrolase-1 domain. Serine 168 serves as the catalytic Nucleophile. Position 238 (arginine 238) interacts with substrate. Active-site residues include aspartate 333 and histidine 366. Substrate is bound at residue aspartate 367.

It belongs to the AB hydrolase superfamily. MetX family. As to quaternary structure, homodimer.

It localises to the cytoplasm. It catalyses the reaction L-homoserine + succinyl-CoA = O-succinyl-L-homoserine + CoA. The protein operates within amino-acid biosynthesis; L-methionine biosynthesis via de novo pathway; O-succinyl-L-homoserine from L-homoserine: step 1/1. Its function is as follows. Transfers a succinyl group from succinyl-CoA to L-homoserine, forming succinyl-L-homoserine. The sequence is that of Homoserine O-succinyltransferase from Cupriavidus taiwanensis (strain DSM 17343 / BCRC 17206 / CCUG 44338 / CIP 107171 / LMG 19424 / R1) (Ralstonia taiwanensis (strain LMG 19424)).